The chain runs to 377 residues: Leukocyte elastase inhibitor (377 aa).

Met-1 is modified (N-acetylmethionine).

This sequence belongs to the serpin family. Ov-serpin subfamily.

The protein resides in the cytoplasm. Regulates the activity of the neutrophil proteases. This chain is Leukocyte elastase inhibitor (serpinb1), found in Xenopus laevis (African clawed frog).